Here is a 138-residue protein sequence, read N- to C-terminus: Small ribosomal subunit protein uS11c (138 aa).

A disordered region spans residues 1-22 (MAKLLPRIGSRKNGRISSRKNA). Residues 9 to 22 (GSRKNGRISSRKNA) are compositionally biased toward basic residues.

It belongs to the universal ribosomal protein uS11 family. In terms of assembly, part of the 30S ribosomal subunit.

It localises to the plastid. The protein resides in the chloroplast. The polypeptide is Small ribosomal subunit protein uS11c (Populus alba (White poplar)).